A 179-amino-acid chain; its full sequence is Segregation and condensation protein B (179 aa).

It belongs to the ScpB family. As to quaternary structure, homodimer. Homodimerization may be required to stabilize the binding of ScpA to the Smc head domains. Component of a cohesin-like complex composed of ScpA, ScpB and the Smc homodimer, in which ScpA and ScpB bind to the head domain of Smc. The presence of the three proteins is required for the association of the complex with DNA.

Its subcellular location is the cytoplasm. Functionally, participates in chromosomal partition during cell division. May act via the formation of a condensin-like complex containing Smc and ScpA that pull DNA away from mid-cell into both cell halves. The protein is Segregation and condensation protein B of Streptococcus equi subsp. zooepidemicus (strain H70).